Reading from the N-terminus, the 258-residue chain is Tryptophan synthase alpha chain (258 aa).

Active-site proton acceptor residues include Glu47 and Asp58.

This sequence belongs to the TrpA family. Tetramer of two alpha and two beta chains.

The enzyme catalyses (1S,2R)-1-C-(indol-3-yl)glycerol 3-phosphate + L-serine = D-glyceraldehyde 3-phosphate + L-tryptophan + H2O. The protein operates within amino-acid biosynthesis; L-tryptophan biosynthesis; L-tryptophan from chorismate: step 5/5. Functionally, the alpha subunit is responsible for the aldol cleavage of indoleglycerol phosphate to indole and glyceraldehyde 3-phosphate. The sequence is that of Tryptophan synthase alpha chain from Bacillus cereus (strain ATCC 10987 / NRS 248).